A 349-amino-acid chain; its full sequence is Nitrilase, bromoxynil-specific (349 aa).

Residues 5–274 enclose the CN hydrolase domain; sequence FKAAAVQAEP…EGIVYAEIDL (270 aa). Glutamate 45 serves as the catalytic Proton acceptor. Catalysis depends on lysine 127, which acts as the Proton donor. Cysteine 161 (nucleophile) is an active-site residue.

This sequence belongs to the carbon-nitrogen hydrolase superfamily. Nitrilase family. Homodimer.

The catalysed reaction is a nitrile + 2 H2O = a carboxylate + NH4(+). Functionally, specific for the herbicide bromoxynil (3,5-dibromo-4-hydroxybenzonitrile); converts it to its metabolite 3,5-dibromo-4-hydroxybenzoic acid. The polypeptide is Nitrilase, bromoxynil-specific (bxn) (Klebsiella pneumoniae subsp. ozaenae).